The primary structure comprises 252 residues: Type III pantothenate kinase (252 aa).

6–13 (DMGNTRLK) serves as a coordination point for ATP. Residues Tyr93 and 100 to 103 (GVDR) contribute to the substrate site. Asp102 (proton acceptor) is an active-site residue. Thr126 is a binding site for ATP. Position 179 (Thr179) interacts with substrate.

The protein belongs to the type III pantothenate kinase family. As to quaternary structure, homodimer. It depends on NH4(+) as a cofactor. The cofactor is K(+).

The protein resides in the cytoplasm. The enzyme catalyses (R)-pantothenate + ATP = (R)-4'-phosphopantothenate + ADP + H(+). It participates in cofactor biosynthesis; coenzyme A biosynthesis; CoA from (R)-pantothenate: step 1/5. In terms of biological role, catalyzes the phosphorylation of pantothenate (Pan), the first step in CoA biosynthesis. This is Type III pantothenate kinase from Cellvibrio japonicus (strain Ueda107) (Pseudomonas fluorescens subsp. cellulosa).